The primary structure comprises 261 residues: Zinc finger protein 664 (261 aa).

9 C2H2-type zinc fingers span residues 3-25 (YKCP…QKIH), 31-53 (HKCD…WRDH), 59-81 (YKCD…KKIH), 87-109 (YKCY…MRVH), 115-137 (YVCS…QRVH), 143-165 (FKCE…QRVH), 171-193 (YKCY…QRVH), 199-221 (YRCC…QRVH), and 227-249 (FKCD…QRVH). Residue Lys-257 forms a Glycyl lysine isopeptide (Lys-Gly) (interchain with G-Cter in SUMO2) linkage.

It belongs to the krueppel C2H2-type zinc-finger protein family.

It is found in the nucleus. Functionally, may be involved in transcriptional regulation. In Homo sapiens (Human), this protein is Zinc finger protein 664.